The following is a 344-amino-acid chain: UDP-N-acetylenolpyruvoylglucosamine reductase (344 aa).

An FAD-binding PCMH-type domain is found at 17–187 (VDYACSELIS…TGVGIKLAKK (171 aa)). Arg-163 is a catalytic residue. The active-site Proton donor is Ser-233. Glu-329 is an active-site residue.

Belongs to the MurB family. FAD is required as a cofactor.

It is found in the cytoplasm. It carries out the reaction UDP-N-acetyl-alpha-D-muramate + NADP(+) = UDP-N-acetyl-3-O-(1-carboxyvinyl)-alpha-D-glucosamine + NADPH + H(+). The protein operates within cell wall biogenesis; peptidoglycan biosynthesis. Its function is as follows. Cell wall formation. This chain is UDP-N-acetylenolpyruvoylglucosamine reductase, found in Shewanella sediminis (strain HAW-EB3).